We begin with the raw amino-acid sequence, 654 residues long: Probable potassium transport system protein Kup (654 aa).

13 consecutive transmembrane segments (helical) span residues 17–37 (GILVTLGIIYGDIGTSPLYVM), 40–60 (IIGLHTIKPEVVLGGISAIFW), 71–91 (VLITLSADNHGEGGIFALYAL), 99–119 (WLIIPAIIGGSALLADGIITP), 137–157 (INTVPIVIAILVVLFTIQQFG), 164–184 (FFAPMMMIWFAMLAILGILQI), 202–222 (LLSIHPDGFYVLGFVFLCTTG), 240–260 (ISWIFVKIALLLNYFGQGAYL), 281–301 (LVMPEWFQPFGIVISTMAAVI), 338–358 (IYIPSINWLLLAGCIGIVLHF), 369–389 (GLAIVLCMIMTTILLTYFMIL), 394–414 (WFIIAPLILLYLVIEFSFLIA), and 423–443 (GYVTLIIASALTFIMSIWYTA).

Belongs to the HAK/KUP transporter (TC 2.A.72) family.

The protein resides in the cell inner membrane. It carries out the reaction K(+)(in) + H(+)(in) = K(+)(out) + H(+)(out). Its function is as follows. Transport of potassium into the cell. Likely operates as a K(+):H(+) symporter. The sequence is that of Probable potassium transport system protein Kup from Flavobacterium psychrophilum (strain ATCC 49511 / DSM 21280 / CIP 103535 / JIP02/86).